Reading from the N-terminus, the 621-residue chain is uncharacterized protein (621 aa).

Low complexity-rich tracts occupy residues 1 to 10, 63 to 79, 137 to 182, and 309 to 347; these read MIEDNINNNE, TEPLTTQLSSSPTTTPS, NNNN…NNFN, and NQSIQQLQQQQQQQQQQQQQQNNNDNNNNNNNNNNNNNN. 7 disordered regions span residues 1-29, 63-100, 135-194, 307-374, 430-471, 492-539, and 594-614; these read MIEDNINNNENENEDKNGNGNENENDKNN, TEPLTTQLSSSPTTTPSLKKRKPKTVRNPFIGPSSNKT, DDNN…KDND, KTNQ…EDDT, YNNN…IAKR, KQSQ…IKII, and PTQINSNSSNNIVSPSSSPSK. The segment covering 348 to 357 has biased composition (polar residues); sequence STLTSSNSLS. 3 stretches are compositionally biased toward low complexity: residues 431–459, 496–539, and 597–613; these read NNNNNNNNNNNNNNNNNNNNNNNNNNNNN, NNNN…IKII, and INSNSSNNIVSPSSSPS.

This is an uncharacterized protein from Dictyostelium discoideum (Social amoeba).